A 716-amino-acid polypeptide reads, in one-letter code: MAKMRVYEYAKAINVSSKEILTALKNMDIVVNNHMAMLEEKTIKQLDAKFKKGGAGVTSQKPAETNKNKPQGINQQPAGNQPNKIRDGKKNDVQNNQFNKNKKNNNNNKNKNKRNHNNKNQYQQKPLKPKKELPEKITFSGSLTVGALAEELGKEPSELIKKLMLLGVMATINQELDKDTIELIASEYGVETEEVIVLEETELEKYEEADKEEDLQIRPPVVTIMGHVDHGKTTLLDSIRKTKVVEGEAGGITQHIGAYQIEENGKKITFLDTPGHAAFTTMRARGAEVTDITILVVAADDGVMPQTVEAINHAKAAEVPIIVAVNKVDKESANPDRVMQELTEYGLVPEAWGGETIFVPLSALTGKGIDELVEMILLVSEVEELKANPNRQAKGTVIEAELDKGRGSVATLLVQTGTLNVGDPIVVGNTFGRVRAMVNDLGRRVKTAGPSTPVEITGLNDVPQAGDQFLVFKDEKTARSVGEARASKQLEEQRSDKAKLSLDDLFEQIKQGDVKDINLIVKADVQGSAEALTAALQKIEVEGVKVKIIHTGVGAITESDIILASASNAIVIGFNVRPDGNAKSTAEAENVDIRLHRIIYKVIEEIEAAMKGMLDPEYEEKVIGQVEVRQTFKVSKIGTIAGGYVTDGHITRDSGLRLIRDGVVIFEGEVDVLKRFKDDVKEVSQGYECGITIKKYNDIREGDIIEAYVMQEIERK.

The disordered stretch occupies residues 53-135 (GGAGVTSQKP…PLKPKKELPE (83 aa)). Positions 57–83 (VTSQKPAETNKNKPQGINQQPAGNQPN) are enriched in polar residues. Low complexity predominate over residues 93-109 (VQNNQFNKNKKNNNNNK). Residues 217-386 (IRPPVVTIMG…LLVSEVEELK (170 aa)) form the tr-type G domain. A G1 region spans residues 226-233 (GHVDHGKT). 226–233 (GHVDHGKT) contacts GTP. Residues 251 to 255 (GITQH) are G2. A G3 region spans residues 272 to 275 (DTPG). GTP is bound by residues 272–276 (DTPGH) and 326–329 (NKVD). The interval 326 to 329 (NKVD) is G4. The tract at residues 362 to 364 (SAL) is G5.

It belongs to the TRAFAC class translation factor GTPase superfamily. Classic translation factor GTPase family. IF-2 subfamily.

The protein localises to the cytoplasm. One of the essential components for the initiation of protein synthesis. Protects formylmethionyl-tRNA from spontaneous hydrolysis and promotes its binding to the 30S ribosomal subunits. Also involved in the hydrolysis of GTP during the formation of the 70S ribosomal complex. The protein is Translation initiation factor IF-2 of Bacillus velezensis (strain DSM 23117 / BGSC 10A6 / LMG 26770 / FZB42) (Bacillus amyloliquefaciens subsp. plantarum).